Reading from the N-terminus, the 162-residue chain is Interleukin-15 (162 aa).

The N-terminal stretch at 1–29 is a signal peptide; it reads MRISKPHLRSVSIQCYLCLLLNSHFLTEA. The propeptide occupies 30 to 48; that stretch reads GIHVFILGCFSAGLPKTEA. Intrachain disulfides connect C83–C133 and C90–C136. A glycan (N-linked (GlcNAc...) asparagine) is linked at N127.

Belongs to the IL-15/IL-21 family.

Its subcellular location is the secreted. Cytokine that plays a major role in the development of inflammatory and protective immune responses to microbial invaders and parasites by modulating immune cells of both the innate and adaptive immune systems. Stimulates the proliferation of natural killer cells, T-cells and B-cells and promotes the secretion of several cytokines. In monocytes, induces the production of IL8 and monocyte chemotactic protein 1/CCL2, two chemokines that attract neutrophils and monocytes respectively to sites of infection. Unlike most cytokines, which are secreted in soluble form, IL15 is expressed in association with its high affinity IL15RA on the surface of IL15-producing cells and delivers signals to target cells that express IL2RB and IL2RG receptor subunits. Binding to its receptor triggers the phosphorylation of JAK1 and JAK3 and the recruitment and subsequent phosphorylation of signal transducer and activator of transcription-3/STAT3 and STAT5. In mast cells, induces the rapid tyrosine phosphorylation of STAT6 and thereby controls mast cell survival and release of cytokines such as IL4. This is Interleukin-15 (IL15) from Macaca mulatta (Rhesus macaque).